The chain runs to 361 residues: Phospho-N-acetylmuramoyl-pentapeptide-transferase (361 aa).

10 helical membrane-spanning segments follow: residues 27–47 (GALF…ISLL), 72–92 (TPTM…LLWA), 99–119 (VWIT…DDYL), 139–159 (ALIA…GLAY), 169–189 (AIVN…VGAG), 200–220 (GLAI…AYLV), 240–260 (LAVV…FNAP), 264–284 (IFMG…VAVA), 289–309 (IVLA…IIQV), and 338–358 (QVVI…LATL).

It belongs to the glycosyltransferase 4 family. MraY subfamily. It depends on Mg(2+) as a cofactor.

The protein resides in the cell inner membrane. The enzyme catalyses UDP-N-acetyl-alpha-D-muramoyl-L-alanyl-gamma-D-glutamyl-meso-2,6-diaminopimeloyl-D-alanyl-D-alanine + di-trans,octa-cis-undecaprenyl phosphate = di-trans,octa-cis-undecaprenyl diphospho-N-acetyl-alpha-D-muramoyl-L-alanyl-D-glutamyl-meso-2,6-diaminopimeloyl-D-alanyl-D-alanine + UMP. It functions in the pathway cell wall biogenesis; peptidoglycan biosynthesis. Catalyzes the initial step of the lipid cycle reactions in the biosynthesis of the cell wall peptidoglycan: transfers peptidoglycan precursor phospho-MurNAc-pentapeptide from UDP-MurNAc-pentapeptide onto the lipid carrier undecaprenyl phosphate, yielding undecaprenyl-pyrophosphoryl-MurNAc-pentapeptide, known as lipid I. In Methylobacterium nodulans (strain LMG 21967 / CNCM I-2342 / ORS 2060), this protein is Phospho-N-acetylmuramoyl-pentapeptide-transferase.